The primary structure comprises 311 residues: Insulin-like growth factor-binding protein 2 (311 aa).

The first 36 residues, 1 to 36 (MALGGVGRGGAARAAWPRLLLAALAPALALAGPALP), serve as a signal peptide directing secretion. Residues 38-120 (VLFRCPPCTA…VQGQGTCARP (83 aa)) form the IGFBP N-terminal domain. 6 cysteine pairs are disulfide-bonded: Cys42–Cys70, Cys45–Cys72, Cys53–Cys73, Cys61–Cys76, Cys84–Cys97, and Cys91–Cys117. Disordered regions lie at residues 112–168 (QGQG…PLKT) and 188–210 (GKVG…TGRT). The Thyroglobulin type-1 domain maps to 209–291 (RTPCQQELDQ…APTIRGDPEC (83 aa)). Cystine bridges form between Cys212–Cys246, Cys257–Cys268, and Cys270–Cys291. Residues 286–288 (RGD) carry the Cell attachment site motif.

In terms of assembly, binds IGF2 more than IGF1.

The protein localises to the secreted. Its function is as follows. Inhibits IGF-mediated growth and developmental rates. IGF-binding proteins prolong the half-life of the IGFs and have been shown to either inhibit or stimulate the growth promoting effects of the IGFs on cell culture. They alter the interaction of IGFs with their cell surface receptors. This Gallus gallus (Chicken) protein is Insulin-like growth factor-binding protein 2 (IGFBP2).